Reading from the N-terminus, the 1050-residue chain is Ankyrin repeat domain-containing protein 27 (1050 aa).

Residues Met-1–Pro-372 are sufficient for GEF activity towards RAB21. The 139-residue stretch at Ala-233–Pro-371 folds into the VPS9 domain. ANK repeat units lie at residues Ser-396 to Thr-426, Arg-462 to Ala-491, His-495 to Val-524, Asn-528 to Ile-560, Lys-564 to Ile-593, and Leu-597 to Ser-627. Residues Ser-396–Asp-460 are sufficient for interaction with VPS29. An interaction with RAB38 region spans residues Pro-451–Thr-600. The tract at residues Pro-451–Val-730 is interaction with RAB32. Residues Gln-625–Lys-665 are disordered. The segment covering Ser-628–Arg-637 has biased composition (polar residues). Residues Ser-638–Ser-658 are compositionally biased toward low complexity. The interval Ser-658–Asp-707 is required for interaction with VAMP7. ANK repeat units follow at residues Arg-668–Asp-698, Asp-743–Ala-772, Asp-776–Lys-805, Ser-809–Ala-838, and Lys-842–Val-871. The sufficient for interaction with VPS29 stretch occupies residues Thr-692–Ser-746. 2 positions are modified to phosphoserine: Ser-962 and Ser-970. The segment at Pro-987–Ser-1050 is disordered. The segment covering Ala-994–Glu-1004 has biased composition (basic and acidic residues). Thr-1023 is subject to Phosphothreonine. Residues Ser-1040–Ser-1050 are compositionally biased toward polar residues.

Interacts with RAB21 (GDP-bound form), VPS29, RAB32 (GTP-bound form), RAB38 (GTP-bound form), VAMP7, KIF5A, KIF5C, GOLGA4. Interacts with low affinity with RAB5. ANKRD27:RAB32 heterodimers can homodimerize to form tetramers. Can interact with RAB38 or RAB32, VPS29 and VAMP7 simultaneously. A decreased interaction with RAB32 seen in the presence of SGSM2.

Its subcellular location is the early endosome. It is found in the late endosome. It localises to the cytoplasmic vesicle membrane. The protein localises to the lysosome. The protein resides in the cell membrane. Its subcellular location is the melanosome. Its function is as follows. May be a guanine exchange factor (GEF) for Rab21, Rab32 and Rab38 and regulate endosome dynamics. May regulate the participation of VAMP7 in membrane fusion events; in vitro inhibits VAMP7-mediated SNARE complex formation by trapping VAMP7 in a closed, fusogenically inactive conformation. Involved in peripheral melanosomal distribution of TYRP1 in melanocytes; the function, which probably is implicating vesicle-trafficking, includes cooperation with Rab32, Rab38 and VAMP7. Involved in the regulation of neurite growth; the function seems to require its GEF activity, probably towards Rab21, and VAMP7 but not Rab32/38. Proposed to be involved in Golgi sorting of VAMP7 and transport of VAMP7 vesicles to the cell surface; the function seems to implicate kinesin heavy chain isoform 5 proteins, GOLGA4, RAB21 and MACF1. Required for the colocalization of VAMP7 and Rab21, probably on TGN sites. Involved in GLUT1 endosome-to-plasma membrane trafficking; the function is dependent of association with VPS29. Regulates the proper trafficking of melanogenic enzymes TYR, TYRP1 and DCT/TYRP2 to melanosomes in melanocytes. This Homo sapiens (Human) protein is Ankyrin repeat domain-containing protein 27 (ANKRD27).